Consider the following 524-residue polypeptide: Adhesion G-protein coupled receptor G5 (524 aa).

Residues 1-23 form the signal peptide; it reads MDPHGALFFYLCLLAAQVVLVET. The Extracellular segment spans residues 24 to 246; the sequence is LSDLLVLMKR…PAELQVPLEY (223 aa). N-linked (GlcNAc...) asparagine glycans are attached at residues Asn-58, Asn-65, Asn-96, Asn-143, Asn-169, and Asn-175. A GAIN-B domain is found at 74–235; that stretch reads QSLVFKLSCD…AVLMQLSGDP (162 aa). 2 cysteine pairs are disulfide-bonded: Cys-185/Cys-217 and Cys-205/Cys-219. The tract at residues 185-235 is GPS; that stretch reads CVFWKEGASKSSWGAWSPEGCYTEQPSATQVLCHCNHLTYFAVLMQLSGDP. The segment at 224–232 is stachel; the sequence is YFAVLMQLS. Residues 247 to 267 form a helical membrane-spanning segment; it reads ISFVGCSISIVASLLTILLYA. Residues 268 to 284 lie on the Cytoplasmic side of the membrane; it reads QSRKQSDSTTRIHMNLN. Residues 285–305 traverse the membrane as a helical segment; it reads GSVLLLNVTFLLSSQMTLPTM. At 306–319 the chain is on the extracellular side; it reads PRPVCKVLAAVLHY. Cys-310 and Cys-400 form a disulfide bridge. Residues 320-340 form a helical membrane-spanning segment; that stretch reads ALLSSLTWMAIEGFNLYLFLG. Residues 341-351 lie on the Cytoplasmic side of the membrane; it reads RVYNAYIRRYL. A helical transmembrane segment spans residues 352–372; it reads LKLCMLGWGFPALLVLLLLMI. Over 373-413 the chain is Extracellular; the sequence is KSSVYGPCVTSLSKSQENGTGFQNVSMCWIRSPMVHSILVM. 2 N-linked (GlcNAc...) asparagine glycosylation sites follow: Asn-390 and Asn-396. A helical transmembrane segment spans residues 414 to 434; the sequence is GYGGFTSLFNLVVLAWALWIL. At 435–453 the chain is on the cytoplasmic side; sequence CRLRAREKALSPWAYRDTA. Residues 454–476 traverse the membrane as a helical segment; sequence MVLGLTVLLGTTWTLAFFSFGVF. The Extracellular segment spans residues 477-480; it reads LLPQ. The chain crosses the membrane as a helical span at residues 481 to 500; the sequence is LFLFTIFNSLYGFFLFLWFC. Topologically, residues 501 to 524 are cytoplasmic; the sequence is SQKRYSDAEAKAEMEAVSSSQMTH.

Belongs to the G-protein coupled receptor 2 family. Adhesion G-protein coupled receptor (ADGR) subfamily. As to quaternary structure, heterodimer of 2 chains generated by proteolytic processing; the large extracellular N-terminal fragment and the membrane-bound C-terminal fragment predominantly remain associated and non-covalently linked. Autoproteolytically processed at the GPS region of the GAIN-B domain; this cleavage modulates receptor activity. Expressed at least in kidney, heart, brain and spleen. As to expression, isoform 1 is predominant in spleen. In the kidney, both isoform 1 and isoform 2 are expressed at similar levels. In terms of tissue distribution, isoform 2 is the major form in heart and brain. In the kidney, both isoform 1 and isoform 2 are expressed at similar levels.

The protein localises to the cell membrane. Forms a heterodimer of 2 chains generated by proteolytic processing that remain associated through non-covalent interactions mediated by the GAIN-B domain. In the inactivated receptor, the Stachel sequence (also named stalk) is embedded in the GAIN-B domain, where it adopts a beta-strand conformation. On activation, the Stachel moves into the 7 transmembrane region and adopts a twisted hook-shaped configuration that forms contacts within the receptor, leading to coupling of a G-alpha protein, which activates signaling. The cleaved GAIN-B and N-terminal domains can then dissociate from the rest of the receptor. In terms of biological role, orphan adhesion G-protein coupled receptor (aGPCR). Ligand binding causes a conformation change that triggers signaling via guanine nucleotide-binding proteins (G proteins) and modulates the activity of downstream effectors, such as adenylate cyclase. ADGRG5 is specifically coupled to G(s) G proteins and mediates activation of adenylate cyclase activity. Functionally, isoform 1, but not isoform 2, is constitutively active, as evidenced by elevated basal cAMP levels, and responds to mechanical activation (shaking). The protein is Adhesion G-protein coupled receptor G5 of Mus musculus (Mouse).